We begin with the raw amino-acid sequence, 290 residues long: Bifunctional protein FolD (290 aa).

NADP(+) contacts are provided by residues 164–166 (GRS), Ser-193, and Ile-234.

The protein belongs to the tetrahydrofolate dehydrogenase/cyclohydrolase family. In terms of assembly, homodimer.

The catalysed reaction is (6R)-5,10-methylene-5,6,7,8-tetrahydrofolate + NADP(+) = (6R)-5,10-methenyltetrahydrofolate + NADPH. It carries out the reaction (6R)-5,10-methenyltetrahydrofolate + H2O = (6R)-10-formyltetrahydrofolate + H(+). It functions in the pathway one-carbon metabolism; tetrahydrofolate interconversion. Its function is as follows. Catalyzes the oxidation of 5,10-methylenetetrahydrofolate to 5,10-methenyltetrahydrofolate and then the hydrolysis of 5,10-methenyltetrahydrofolate to 10-formyltetrahydrofolate. This Cytophaga hutchinsonii (strain ATCC 33406 / DSM 1761 / CIP 103989 / NBRC 15051 / NCIMB 9469 / D465) protein is Bifunctional protein FolD.